The following is a 430-amino-acid chain: 5-methylthioadenosine/S-adenosylhomocysteine deaminase (430 aa).

Residues histidine 59 and histidine 61 each coordinate Zn(2+). The substrate site is built by glutamate 88 and histidine 181. Zn(2+) is bound at residue histidine 208. Residues glutamate 211 and aspartate 296 each coordinate substrate. Aspartate 296 lines the Zn(2+) pocket.

This sequence belongs to the metallo-dependent hydrolases superfamily. MTA/SAH deaminase family. It depends on Zn(2+) as a cofactor.

The enzyme catalyses S-adenosyl-L-homocysteine + H2O + H(+) = S-inosyl-L-homocysteine + NH4(+). It carries out the reaction S-methyl-5'-thioadenosine + H2O + H(+) = S-methyl-5'-thioinosine + NH4(+). In terms of biological role, catalyzes the deamination of 5-methylthioadenosine and S-adenosyl-L-homocysteine into 5-methylthioinosine and S-inosyl-L-homocysteine, respectively. Is also able to deaminate adenosine. The polypeptide is 5-methylthioadenosine/S-adenosylhomocysteine deaminase (Aquifex aeolicus (strain VF5)).